The primary structure comprises 240 residues: Mediator of RNA polymerase II transcription subunit 19-B (240 aa).

Over residues 1 to 14 the composition is skewed to polar residues; sequence MTEIFSSLYGQPDS. Disordered stretches follow at residues 1–29 and 168–240; these read MTEI…GSGK and PKKK…SSLR. Basic residues-rich tracts occupy residues 168-180 and 209-221; these read PKKK…KHHR and KKKK…KKNR.

This sequence belongs to the Mediator complex subunit 19 family. Component of the Mediator complex.

It localises to the nucleus. In terms of biological role, component of the Mediator complex, a coactivator involved in the regulated transcription of nearly all RNA polymerase II-dependent genes. Mediator functions as a bridge to convey information from gene-specific regulatory proteins to the basal RNA polymerase II transcription machinery. Mediator is recruited to promoters by direct interactions with regulatory proteins and serves as a scaffold for the assembly of a functional preinitiation complex with RNA polymerase II and the general transcription factors. This Danio rerio (Zebrafish) protein is Mediator of RNA polymerase II transcription subunit 19-B (med19b).